The sequence spans 244 residues: High frequency lysogenization protein HflD homolog (244 aa).

This sequence belongs to the HflD family.

Its subcellular location is the cytoplasm. The protein localises to the cell inner membrane. The chain is High frequency lysogenization protein HflD homolog from Acinetobacter baumannii (strain SDF).